The primary structure comprises 102 residues: RNA-binding protein Hfq (102 aa).

Positions 9–68 (DPFLNALRRERVPVSIYLVNGIKLQGQIESFDQFVILLKNTVSQMVYKHAISTVVPSRPV) constitute a Sm domain. Residues 63-102 (VPSRPVSHHSNNAGGGTSSNYHHGSSAQNTSAQQDSEETE) are disordered. Residues 70–96 (HHSNNAGGGTSSNYHHGSSAQNTSAQQ) show a composition bias toward polar residues.

This sequence belongs to the Hfq family. As to quaternary structure, homohexamer.

Functionally, RNA chaperone that binds small regulatory RNA (sRNAs) and mRNAs to facilitate mRNA translational regulation in response to envelope stress, environmental stress and changes in metabolite concentrations. Also binds with high specificity to tRNAs. This chain is RNA-binding protein Hfq, found in Escherichia fergusonii (strain ATCC 35469 / DSM 13698 / CCUG 18766 / IAM 14443 / JCM 21226 / LMG 7866 / NBRC 102419 / NCTC 12128 / CDC 0568-73).